The chain runs to 395 residues: GA-binding protein subunit beta-1 (395 aa).

Serine 2 carries the N-acetylserine modification. 2 ANK repeats span residues 5-34 (DLGK…PFTT) and 37-66 (LGTS…SRDA). Lysine 69 is subject to N6-acetyllysine. ANK repeat units lie at residues 70–99 (VDRT…DVNA), 103–132 (LKMT…DVHT), and 136–166 (FCKT…QINT). A transcription activation and HCFC1 interaction region spans residues 258-327 (DGAIQQVVSS…ETVISEEPPA (70 aa)). N6-acetyllysine occurs at positions 352 and 381.

As to quaternary structure, heterotetramer of two alpha and two beta subunits. Interacts with HCFC1, causing repression of transcriptional activity. Post-translationally, acetylated by EP300/p300. Deacetylated by SIRT7, promoting heterotetramerization and activity.

It is found in the nucleus. Functionally, transcription factor capable of interacting with purine rich repeats (GA repeats). Acts as a master regulator of nuclear-encoded mitochondrial genes. In terms of biological role, (Microbial infection) Necessary for the expression of the Adenovirus E4 gene. In Homo sapiens (Human), this protein is GA-binding protein subunit beta-1 (GABPB1).